A 106-amino-acid chain; its full sequence is MITTTSPTIEGKQIIEYKKIVFGEVITGINVLKDIGAGIRNFFGGRSGGYEEELIQAREAAIEEMENRAEALGANAIIAVDVDYEVLGADNGMLMVSVSGTAVVVE.

It belongs to the UPF0145 family.

This Listeria grayi (Listeria murrayi) protein is UPF0145 protein.